A 60-amino-acid polypeptide reads, in one-letter code: Toxin C10S2C2 (60 aa).

4 disulfides stabilise this stretch: Cys3/Cys22, Cys17/Cys39, Cys41/Cys52, and Cys53/Cys58. An important for binding to L-type calcium channels region spans residues 41 to 48 (CPTAMWPY).

This sequence belongs to the three-finger toxin family. Short-chain subfamily. L-type calcium blocker sub-subfamily. Expressed by the venom gland.

It localises to the secreted. In terms of biological role, this specific blocker of the L-type calcium channel (Cav1/CACNA1) is a smooth muscle relaxant and an inhibitor of cardiac contractions. The sequence is that of Toxin C10S2C2 from Dendroaspis angusticeps (Eastern green mamba).